A 687-amino-acid chain; its full sequence is SLCO1B3-SLCO1B7 readthrough transcript protein (687 aa).

At 1 to 29 (MDQHQHLNKTAESASSEKKKTRRCNGFKM) the chain is on the cytoplasmic side. A helical membrane pass occupies residues 30-50 (FLAALSFSYIAKALGGIIMKI). Topologically, residues 51-63 (SITQIERRFDISS) are extracellular. A helical transmembrane segment spans residues 64 to 84 (SLAGLIDGSFEIGNLLVIVFV). The Cytoplasmic segment spans residues 85-96 (SYFGSKLHRPKL). Residues 97–117 (IGIGCLLMGTGSILTSLPHFF) traverse the membrane as a helical segment. Residues 118-170 (MGYYRYSKETNIDPSENSTSNLPNCLINQMLSLNRTPSEIIERGCVKESGSHM) lie on the Extracellular side of the membrane. N-linked (GlcNAc...) asparagine glycosylation is found at asparagine 134 and asparagine 151. The helical transmembrane segment at 171–191 (WIYVFMGNMLRGIGETPIVPL) threads the bilayer. Topologically, residues 192-206 (GISYIDDFAKEGHSS) are cytoplasmic. The chain crosses the membrane as a helical span at residues 207 to 227 (LYLGTVNVMGMTGLVFAFMLG). Residues 228 to 258 (SLFAKMYVDIGYVDLSTIRITPKDSRWVGAW) lie on the Extracellular side of the membrane. A helical membrane pass occupies residues 259-279 (WLGFLVSGIVSIISSIPFFFL). The Cytoplasmic portion of the chain corresponds to 280-339 (PLNPNKPQKERKVSLFLHVLKTNDKRNQIANLTNRRKYITKNVTGFFQSLKSILTNPLYV). Residues 340–360 (IFVIFTLLHMSSYIASLTYII) traverse the membrane as a helical segment. Topologically, residues 361 to 376 (KMVEQQYGWSASKTNF) are extracellular. The helical transmembrane segment at 377-397 (LLGVLALPAVAIGMFSGGYII) threads the bilayer. Residues 398–409 (KKFKLSLVGLAK) are Cytoplasmic-facing. The helical transmembrane segment at 410 to 430 (LAFCSATVHLLSQVLYFFLIC) threads the bilayer. Topologically, residues 431-539 (ESKSVAGLTL…CTRKSYVYFV (109 aa)) are extracellular. The Kazal-like domain maps to 453–508 (DVPLSYCNSECNCDESQWEPVCGNNGITYLSPCLAGCKSSSGNKEPIVFYNCSCVE). 3 cysteine pairs are disulfide-bonded: cysteine 459/cysteine 489, cysteine 465/cysteine 485, and cysteine 474/cysteine 506. N-linked (GlcNAc...) asparagine glycans are attached at residues asparagine 503 and asparagine 516. A helical transmembrane segment spans residues 540–560 (IQVLDAFLCAVGLTSYSVLVI). The Cytoplasmic portion of the chain corresponds to 561 to 568 (RIVQPELK). The chain crosses the membrane as a helical span at residues 569 to 589 (ALAIGFHSMIMRSLGGILVPI). Topologically, residues 590–624 (YFGALIDTTCMKWSTNSCGARGACRIYNSTYLGRA) are extracellular. Residue asparagine 617 is glycosylated (N-linked (GlcNAc...) asparagine). A helical membrane pass occupies residues 625 to 645 (FFGLKVALIFPVLVLLTVFIF). At 646–687 (VVRKKSHGKDTKVLENERQVMDEANLEFLNDSEHFVPSAEEQ) the chain is on the cytoplasmic side.

The protein belongs to the organo anion transporter (TC 2.A.60) family. In terms of tissue distribution, expressed in the perivenular areas (centrilobular) of the liver (at protein level).

Its subcellular location is the smooth endoplasmic reticulum membrane. The protein localises to the cell membrane. The protein resides in the endoplasmic reticulum membrane. It carries out the reaction 17beta-estradiol 17-O-(beta-D-glucuronate)(out) = 17beta-estradiol 17-O-(beta-D-glucuronate)(in). The enzyme catalyses dehydroepiandrosterone 3-sulfate(out) = dehydroepiandrosterone 3-sulfate(in). The catalysed reaction is taurocholate(out) = taurocholate(in). It catalyses the reaction lithocholate(out) = lithocholate(in). With respect to regulation, transport activity is induced by farnesoid X receptor (FXR) agonists such as chenodeoxycholate. Functionally, mediates the Na(+)-independent uptake of organic anions. Transports the conjugated steroids 17-beta-glucuronosyl estradiol (17beta-estradiol 17-O-(beta-D-glucuronate) or E2G) and dehydroepiandrosterone 3-sulfate (DHEAS) at the smooth endoplasmic reticulum membrane (SER), granting access to metabolizing enzymes. Contributes to the metabolism of bile acids such as taurocholate (cholyltaurine) and lithocholate, by functioning as a doorway between SER and cytosol, thereby decreasing their circulating levels and protecting the organism from their detergent properties. Regulates access or exit of drugs to the SER lumen. In Homo sapiens (Human), this protein is SLCO1B3-SLCO1B7 readthrough transcript protein.